The chain runs to 400 residues: Phosphoglycerate kinase (400 aa).

Substrate contacts are provided by residues 21-23 (DFN), R36, 59-62 (HLGR), R119, and R160. Residues K211, E329, and 356 to 359 (GGDS) contribute to the ATP site.

This sequence belongs to the phosphoglycerate kinase family. Monomer.

The protein resides in the cytoplasm. The enzyme catalyses (2R)-3-phosphoglycerate + ATP = (2R)-3-phospho-glyceroyl phosphate + ADP. Its pathway is carbohydrate degradation; glycolysis; pyruvate from D-glyceraldehyde 3-phosphate: step 2/5. The sequence is that of Phosphoglycerate kinase from Lactiplantibacillus plantarum (strain ATCC BAA-793 / NCIMB 8826 / WCFS1) (Lactobacillus plantarum).